Reading from the N-terminus, the 427-residue chain is N-myc proto-oncogene protein (427 aa).

4 disordered regions span residues Phe-45–Leu-79, Glu-144–Ala-173, Ala-195–Lys-255, and Ala-297–Asn-349. Composition is skewed to pro residues over residues Pro-49 to Gly-61 and Ala-152 to Pro-167. Low complexity predominate over residues Arg-210–Asp-221. Acidic residues predominate over residues Thr-222 to Asp-242. 2 positions are modified to phosphoserine; by CK2: Ser-224 and Ser-226. Residues Glu-343–Leu-396 form the bHLH domain. Positions Leu-396–Leu-417 are leucine-zipper.

In terms of assembly, efficient DNA binding requires dimerization with another bHLH protein. Binds DNA as a heterodimer with MAX.

The protein resides in the nucleus. This is N-myc proto-oncogene protein (MYCN) from Serinus canaria (Island canary).